A 288-amino-acid chain; its full sequence is 2-hydroxy-6-oxononadienedioate/2-hydroxy-6-oxononatrienedioate hydrolase (288 aa).

Residues 39–274 (LVLLHGSGPG…RCGHWAQWEH (236 aa)) form the AB hydrolase-1 domain. The active-site Proton acceptor is histidine 268.

It belongs to the AB hydrolase superfamily. MhpC family. Homodimer.

The catalysed reaction is (2Z,4E)-2-hydroxy-6-oxonona-2,4-dienedioate + H2O = (2Z)-2-hydroxypenta-2,4-dienoate + succinate + H(+). It catalyses the reaction (2Z,4E,7E)-2-hydroxy-6-oxonona-2,4,7-trienedioate + H2O = (2Z)-2-hydroxypenta-2,4-dienoate + fumarate + H(+). The protein operates within aromatic compound metabolism; 3-phenylpropanoate degradation. Its function is as follows. Catalyzes the cleavage of the C5-C6 bond of 2-hydroxy-6-oxononadienedioate and 2-hydroxy-6-oxononatrienedioate, a dienol ring fission product of the bacterial meta-cleavage pathway for degradation of phenylpropionic acid. This Paraburkholderia phymatum (strain DSM 17167 / CIP 108236 / LMG 21445 / STM815) (Burkholderia phymatum) protein is 2-hydroxy-6-oxononadienedioate/2-hydroxy-6-oxononatrienedioate hydrolase.